We begin with the raw amino-acid sequence, 207 residues long: MAEYTLPDLDYDYGALEPHISGQINELHHSKHHATYVKGVNDAIAKLEEARANGDHAAIFLNEKNLAFHLGGHINHSIWWKNLSPNGGDKPTGELAAAIDDQFGSFDKFQAQFTAAANGLQGSGWAVLGYDSLGGRLLTFQLYDQQANVPLGIIPLLQVDMWEHAFYLQYKNVKADYVKAFWNVVNWDDVQNRFAAATSKTSGLIFG.

Mn(2+) contacts are provided by H28, H76, D160, and H164.

It belongs to the iron/manganese superoxide dismutase family. As to quaternary structure, homotetramer. It depends on Mn(2+) as a cofactor.

The protein localises to the secreted. The enzyme catalyses 2 superoxide + 2 H(+) = H2O2 + O2. In terms of biological role, destroys superoxide anion radicals which are normally produced within the cells and which are toxic to biological systems. This Mycolicibacterium smegmatis (Mycobacterium smegmatis) protein is Superoxide dismutase [Mn] (sodA).